The chain runs to 420 residues: Acetyl-CoA acetyltransferase, mitochondrial (420 aa).

The transit peptide at 1-33 (MAFCGPRTAARLSHSTRALHYTHRGHVSQRTLN) directs the protein to the mitochondrion. The active-site Acyl-thioester intermediate is the cysteine 119. Residues tyrosine 212, 251–253 (RVD), and lysine 256 each bind CoA. A K(+)-binding site is contributed by tyrosine 212. 3 residues coordinate K(+): alanine 273, alanine 274, and alanine 276. Position 277 (serine 277) interacts with CoA. Valine 374 is a binding site for K(+). Cysteine 406 functions as the Proton donor/acceptor in the catalytic mechanism.

It belongs to the thiolase-like superfamily. Thiolase family. Homotetramer.

The protein localises to the mitochondrion. The catalysed reaction is 2 acetyl-CoA = acetoacetyl-CoA + CoA. It catalyses the reaction propanoyl-CoA + acetyl-CoA = 2-methyl-3-oxobutanoyl-CoA + CoA. The protein operates within lipid metabolism; fatty acid beta-oxidation. In terms of biological role, this is one of the enzymes that catalyzes the last step of the mitochondrial beta-oxidation pathway, an aerobic process breaking down fatty acids into acetyl-CoA. Using free coenzyme A/CoA, catalyzes the thiolytic cleavage of medium- to long-chain 3-oxoacyl-CoAs into acetyl-CoA and a fatty acyl-CoA shortened by two carbon atoms. The activity of the enzyme is reversible and it can also catalyze the condensation of two acetyl-CoA molecules into acetoacetyl-CoA. Thereby, it plays a major role in ketone body metabolism. In Xenopus tropicalis (Western clawed frog), this protein is Acetyl-CoA acetyltransferase, mitochondrial (acat1).